An 807-amino-acid chain; its full sequence is uncharacterized protein (807 aa).

In terms of domain architecture, Reverse transcriptase spans 281–566; that stretch reads IIQSLKSEEF…DKILFLGTNI (286 aa).

The protein localises to the mitochondrion. This is an uncharacterized protein from Schizosaccharomyces pombe (strain 972 / ATCC 24843) (Fission yeast).